The following is a 300-amino-acid chain: PAK4-inhibitor INKA2 (300 aa).

3 disordered regions span residues 59-104 (GGTP…SSPK), 178-201 (LEKG…GQSR), and 230-288 (KEKP…LEPS). Over residues 60–73 (GTPTFSCPESSQEQ) the composition is skewed to polar residues. A compositionally biased stretch (low complexity) spans 93 to 102 (SSSQPSFDSS). The segment at 140–183 (EPDDWTSTLMSRGRNRQPLVLGDNVFADLVGNWLDLPELEKGGE) is inka box. Basic residues predominate over residues 246–256 (GRSKKVKKRSL).

The protein belongs to the INKA family. In terms of assembly, interacts with PAK4. In terms of tissue distribution, enriched in the nervous system.

Its subcellular location is the nucleus. In terms of biological role, inhibitor of the serine/threonine-protein kinase PAK4. Acts by binding PAK4 in a substrate-like manner, inhibiting the protein kinase activity. The chain is PAK4-inhibitor INKA2 from Mus musculus (Mouse).